We begin with the raw amino-acid sequence, 79 residues long: MVSKKNKIVAALLAFFFGGLGIHKFYLGRVGQGILYILFCWTGIPSIIAFIEFIIFLCGSEEGFDQKYNFYYFQQQSKA.

The 52-residue stretch at 3 to 54 (SKKNKIVAALLAFFFGGLGIHKFYLGRVGQGILYILFCWTGIPSIIAFIEFI) folds into the TM2 domain. The next 2 helical transmembrane spans lie at 8-28 (IVAA…FYLG) and 37-57 (ILFC…IIFL).

The protein localises to the cell membrane. This is an uncharacterized protein from Bacillus subtilis (strain 168).